A 70-amino-acid chain; its full sequence is Putative membrane protein insertion efficiency factor (70 aa).

Belongs to the UPF0161 family.

The protein localises to the cell inner membrane. Could be involved in insertion of integral membrane proteins into the membrane. This Desulforapulum autotrophicum (strain ATCC 43914 / DSM 3382 / VKM B-1955 / HRM2) (Desulfobacterium autotrophicum) protein is Putative membrane protein insertion efficiency factor.